A 493-amino-acid polypeptide reads, in one-letter code: Glutamyl-tRNA(Gln) amidotransferase subunit A (493 aa).

Residues Lys78 and Ser158 each act as charge relay system in the active site. Ser182 acts as the Acyl-ester intermediate in catalysis.

This sequence belongs to the amidase family. GatA subfamily. Heterotrimer of A, B and C subunits.

It carries out the reaction L-glutamyl-tRNA(Gln) + L-glutamine + ATP + H2O = L-glutaminyl-tRNA(Gln) + L-glutamate + ADP + phosphate + H(+). Allows the formation of correctly charged Gln-tRNA(Gln) through the transamidation of misacylated Glu-tRNA(Gln) in organisms which lack glutaminyl-tRNA synthetase. The reaction takes place in the presence of glutamine and ATP through an activated gamma-phospho-Glu-tRNA(Gln). The polypeptide is Glutamyl-tRNA(Gln) amidotransferase subunit A (Beijerinckia indica subsp. indica (strain ATCC 9039 / DSM 1715 / NCIMB 8712)).